The primary structure comprises 1028 residues: MEMSSKRKHSSGPISLRSTKHLRSDTAASPQPLTPDDQTLGEEAVYVLDNEDEDLSHVLPLAPAAAAQTDSPEWQATIETVVKSVVSIHFCQTASFDTDLSMSSQATGFVVDAEKGYILTNRHVVCAGPFWGYCIFDNHEECDVRPVYRDPVHDFGILKFDPAAIKYMPVTELKLSPDAAKVGVEIRVVGNDAGEKLSILSGVISRLDRNAPEYGEGYSDFNTNYIQAAAAASGGSSGSPVVNIDGHAIALQAGGRADGAATDYFLPLDRPLRALECIRKGVPVTRGTIQTQWIIKPFDECRRLGLSPEWEAAVRKGSPKETGMLVAEIVLPEGPGDGKLQEGDVLIKVNGELLTQFVKLDAILDSSVGKDVHLLVQRGGEDLEVSCTVGDLHAITPARYVTVAGATFHDLSYQQARLYAIACKGVYVCEAAGSFKLENTFSGWIVDTVDKRPTKNLDEFIEVMKTIPDRARVALSYRHIRDLHTRGTSIVHIDRHWHPHIREAIRNDETGLWDFTNIADPLPAEPPVPRKADFIQLDGANHPAAADIVRSFVRVSCTMPVKLDGYPQARKAGFGLVVDAEAGLVLVSRAIVPFDLCDINVTVADSIIVMAKVIFLHPLQNYTIIQYDPSLVQAPVKTARLSTNYIKQGADTIFVGFNQNFRIVVAKTAVTDITTVAIPPNAAAPRYRALNLDAITVDTGLSSQCSNGVLIGEDGIVQALWLNYLGERTASSHKDVEYHLGLATPSLLPIINQIESGSLPKLRIMDMESYVIQMSQARIMGVSEEWIEKVAIANPARHELFMVRKVDCASPLTEDTHQLEEGDIILTLNDKLITRVSEFDIMYHHETLDALIVRNGQEMRVNIKTVPTEDLETDRALIFCGAVLQKPHHAVRQQISKLHSEVYVSARSRGSPAYQYGLSPTNFITAVNGVKTPDLDSFIKQVNVIPNNTYFRLRAVTFDNVPWVVTMKKNDHYFPMSEYIKDPSAPEGWRSISHDKELLRLDSDNLNADAMDEGRDDGISDMEPDGEK.

Over residues 1–10 (MEMSSKRKHS) the composition is skewed to basic residues. Residues 1 to 39 (MEMSSKRKHSSGPISLRSTKHLRSDTAASPQPLTPDDQT) are disordered. The serine protease stretch occupies residues 85–269 (VVSIHFCQTA…AATDYFLPLD (185 aa)). Residues histidine 123, aspartate 154, and serine 236 each act as charge relay system in the active site. PDZ domains follow at residues 292-377 (QWII…LLVQ) and 878-959 (IFCG…VTFD). A disordered region spans residues 1003–1028 (SDNLNADAMDEGRDDGISDMEPDGEK). Residues 1019 to 1028 (ISDMEPDGEK) are compositionally biased toward acidic residues.

This sequence belongs to the peptidase S1C family.

Its subcellular location is the nucleus. Its function is as follows. Nuclear serine protease which mediates apoptosis. The chain is Pro-apoptotic serine protease NMA111 (NMA111) from Ajellomyces capsulatus (strain NAm1 / WU24) (Darling's disease fungus).